The following is a 308-amino-acid chain: Tetraacyldisaccharide 4'-kinase (308 aa).

Residue 63 to 70 (SFGGNGKT) coordinates ATP.

It belongs to the LpxK family.

It carries out the reaction a lipid A disaccharide + ATP = a lipid IVA + ADP + H(+). It functions in the pathway glycolipid biosynthesis; lipid IV(A) biosynthesis; lipid IV(A) from (3R)-3-hydroxytetradecanoyl-[acyl-carrier-protein] and UDP-N-acetyl-alpha-D-glucosamine: step 6/6. Its function is as follows. Transfers the gamma-phosphate of ATP to the 4'-position of a tetraacyldisaccharide 1-phosphate intermediate (termed DS-1-P) to form tetraacyldisaccharide 1,4'-bis-phosphate (lipid IVA). The polypeptide is Tetraacyldisaccharide 4'-kinase (Campylobacter jejuni subsp. jejuni serotype O:6 (strain 81116 / NCTC 11828)).